Consider the following 308-residue polypeptide: Methionyl-tRNA formyltransferase (308 aa).

109 to 112 (SLLP) contributes to the (6S)-5,6,7,8-tetrahydrofolate binding site.

The protein belongs to the Fmt family.

It catalyses the reaction L-methionyl-tRNA(fMet) + (6R)-10-formyltetrahydrofolate = N-formyl-L-methionyl-tRNA(fMet) + (6S)-5,6,7,8-tetrahydrofolate + H(+). In terms of biological role, attaches a formyl group to the free amino group of methionyl-tRNA(fMet). The formyl group appears to play a dual role in the initiator identity of N-formylmethionyl-tRNA by promoting its recognition by IF2 and preventing the misappropriation of this tRNA by the elongation apparatus. This is Methionyl-tRNA formyltransferase from Rhizorhabdus wittichii (strain DSM 6014 / CCUG 31198 / JCM 15750 / NBRC 105917 / EY 4224 / RW1) (Sphingomonas wittichii).